Reading from the N-terminus, the 102-residue chain is RNA-binding protein Hfq (102 aa).

Residues 9–68 enclose the Sm domain; it reads DPFLNALRRERVPVSIYLVNGIKLQGQIESFDQFVILLKNTVSQMVYKHAISTVVPSRPV. Positions 63-102 are disordered; the sequence is VPSRPVSHHSNNAGGGASNNYHHGSNVQGSTAQQDSEETE. Over residues 70–88 the composition is skewed to low complexity; the sequence is HHSNNAGGGASNNYHHGSN.

The protein belongs to the Hfq family. As to quaternary structure, homohexamer.

Its function is as follows. RNA chaperone that binds small regulatory RNA (sRNAs) and mRNAs to facilitate mRNA translational regulation in response to envelope stress, environmental stress and changes in metabolite concentrations. Also binds with high specificity to tRNAs. In Salmonella choleraesuis (strain SC-B67), this protein is RNA-binding protein Hfq.